We begin with the raw amino-acid sequence, 125 residues long: Small ribosomal subunit protein uS12c (125 aa).

The interval 1–23 (MPTLEHLTRSPRKKIKRKTKSPA) is disordered. Positions 9-20 (RSPRKKIKRKTK) are enriched in basic residues.

This sequence belongs to the universal ribosomal protein uS12 family. In terms of assembly, part of the 30S ribosomal subunit.

Its subcellular location is the plastid. The protein localises to the chloroplast. Functionally, with S4 and S5 plays an important role in translational accuracy. Located at the interface of the 30S and 50S subunits. This is Small ribosomal subunit protein uS12c (rps12) from Euglena gracilis.